A 559-amino-acid polypeptide reads, in one-letter code: Membrane protein insertase YidC (559 aa).

Transmembrane regions (helical) follow at residues 5-25 (IVNL…WQYF), 332-352 (AIDF…MNFF), 355-375 (YVGN…LLMF), 429-449 (LPIL…YVTI), 474-494 (LFGL…WPIL), and 520-540 (FMPL…LIYW).

It belongs to the OXA1/ALB3/YidC family. Type 1 subfamily. Interacts with the Sec translocase complex via SecD. Specifically interacts with transmembrane segments of nascent integral membrane proteins during membrane integration.

The protein localises to the cell inner membrane. Functionally, required for the insertion and/or proper folding and/or complex formation of integral membrane proteins into the membrane. Involved in integration of membrane proteins that insert both dependently and independently of the Sec translocase complex, as well as at least some lipoproteins. Aids folding of multispanning membrane proteins. The protein is Membrane protein insertase YidC of Rickettsia bellii (strain OSU 85-389).